A 347-amino-acid polypeptide reads, in one-letter code: Doublecortin domain-containing protein 2C (347 aa).

Doublecortin domains lie at 16–98 (KTIL…LDYI) and 136–217 (RYIN…IPYW). The interval 235-260 (KYTQTKKRVESKVKEPLQNDSVPPRS) is disordered. The segment covering 241-251 (KRVESKVKEPL) has biased composition (basic and acidic residues).

It is found in the cell projection. It localises to the cilium. Its subcellular location is the flagellum. The protein resides in the cytoplasm. The chain is Doublecortin domain-containing protein 2C from Mus musculus (Mouse).